The primary structure comprises 150 residues: 3-dehydroquinate dehydratase (150 aa).

The active-site Proton acceptor is the Y26. Substrate is bound by residues N77, H83, and D90. H103 (proton donor) is an active-site residue. Substrate is bound by residues 104–105 (LS) and R114.

The protein belongs to the type-II 3-dehydroquinase family. In terms of assembly, homododecamer.

The enzyme catalyses 3-dehydroquinate = 3-dehydroshikimate + H2O. It functions in the pathway metabolic intermediate biosynthesis; chorismate biosynthesis; chorismate from D-erythrose 4-phosphate and phosphoenolpyruvate: step 3/7. Functionally, catalyzes a trans-dehydration via an enolate intermediate. This chain is 3-dehydroquinate dehydratase, found in Yersinia enterocolitica serotype O:8 / biotype 1B (strain NCTC 13174 / 8081).